The primary structure comprises 362 residues: Phospho-N-acetylmuramoyl-pentapeptide-transferase (362 aa).

10 helical membrane passes run 18-38 (VFGY…AISL), 73-93 (TMGG…WGDL), 97-117 (YVWV…VDDW), 134-154 (YFWT…SATT), 160-180 (LIVP…FIAL), 200-220 (GLAI…AYVA), 237-257 (AGEL…FLWF), 264-284 (VFMG…IAVV), 289-309 (IVLF…MVQV), and 339-359 (QVVV…LSTL).

This sequence belongs to the glycosyltransferase 4 family. MraY subfamily. The cofactor is Mg(2+).

It is found in the cell inner membrane. It catalyses the reaction UDP-N-acetyl-alpha-D-muramoyl-L-alanyl-gamma-D-glutamyl-meso-2,6-diaminopimeloyl-D-alanyl-D-alanine + di-trans,octa-cis-undecaprenyl phosphate = di-trans,octa-cis-undecaprenyl diphospho-N-acetyl-alpha-D-muramoyl-L-alanyl-D-glutamyl-meso-2,6-diaminopimeloyl-D-alanyl-D-alanine + UMP. It participates in cell wall biogenesis; peptidoglycan biosynthesis. Functionally, catalyzes the initial step of the lipid cycle reactions in the biosynthesis of the cell wall peptidoglycan: transfers peptidoglycan precursor phospho-MurNAc-pentapeptide from UDP-MurNAc-pentapeptide onto the lipid carrier undecaprenyl phosphate, yielding undecaprenyl-pyrophosphoryl-MurNAc-pentapeptide, known as lipid I. This chain is Phospho-N-acetylmuramoyl-pentapeptide-transferase, found in Azoarcus sp. (strain BH72).